The chain runs to 525 residues: UPF0288 protein MA_3997 (525 aa).

Belongs to the UPF0288 family.

The polypeptide is UPF0288 protein MA_3997 (Methanosarcina acetivorans (strain ATCC 35395 / DSM 2834 / JCM 12185 / C2A)).